The chain runs to 142 residues: Small ribosomal subunit protein bS6 (142 aa).

Residues 110 to 133 (NKKPSHAKEKHEKTEHTHSHHAEE) are compositionally biased toward basic and acidic residues. Residues 110 to 142 (NKKPSHAKEKHEKTEHTHSHHAEEAESVGSHSE) form a disordered region.

This sequence belongs to the bacterial ribosomal protein bS6 family.

Its function is as follows. Binds together with bS18 to 16S ribosomal RNA. The polypeptide is Small ribosomal subunit protein bS6 (Helicobacter pylori (strain P12)).